The sequence spans 549 residues: Pleckstrin homology domain-containing family A member 8 (549 aa).

Positions 1 to 93 (MEGVLYKWTN…WLVALGTAKA (93 aa)) constitute a PH domain. Disordered regions lie at residues 180-245 (NPDL…ENIS) and 257-312 (QNDL…QEVQ). The segment covering 203–219 (KSNDPKNLHPGETRKDL) has biased composition (basic and acidic residues). Residues 276–288 (EPVEEQQTDGSTE) show a composition bias toward acidic residues. Residues 299-309 (EVSMSPTQNKQ) show a composition bias toward polar residues.

Its subcellular location is the cytoplasm. The protein resides in the golgi apparatus. It is found in the trans-Golgi network membrane. The protein localises to the membrane. Functionally, cargo transport protein that is required for apical transport from the trans-Golgi network (TGN) to the plasma membrane. This is Pleckstrin homology domain-containing family A member 8 (plekha8) from Danio rerio (Zebrafish).